Here is a 2465-residue protein sequence, read N- to C-terminus: Serine/threonine-protein kinase TOR (2465 aa).

11 HEAT repeats span residues 184–221 (VHVP…VIEK), 271–308 (SRYR…FLRD), 348–389 (AELV…AMGP), 549–587 (RLVE…FDDF), 588–625 (LAQA…KNPA), 717–755 (QYLP…STGY), 761–799 (NEYP…LDPH), 888–926 (PYLP…IVRQ), 981–1018 (MYIL…VFGG), 1022–1059 (EHMH…TVQV), and 1061–1098 (THVS…ALGE). The interval 1158-1191 (DFGGVPSEEADETQRQPRSHQVNDVRLRSAGEAS) is disordered. One can recognise an FAT domain in the interval 1297 to 1877 (LLGALAEKCR…MYPLLVACKS (581 aa)). Residues 2051–2369 (FVPQLIVITS…PPRGAREREL (319 aa)) form the PI3K/PI4K catalytic domain. Residues 2057-2063 (VITSKQR) are G-loop. Residues 2230 to 2238 (GLGDRHPSN) form a catalytic loop region. Positions 2250–2275 (HIDFGDCFEASMNREKFPEKVPFRLT) are activation loop. The tract at residues 2401-2431 (RDFSSGSSLSGAGSSTQHGNEHLASGDTREV) is disordered. The segment covering 2404–2415 (SSGSSLSGAGSS) has biased composition (low complexity). Residues 2433-2465 (PGLSVKVQVQRLILQATSHENLCQNYVGWCPFW) form the FATC domain.

The protein belongs to the PI3/PI4-kinase family. The target of rapamycin complex 1 (TORC1) is composed of at least RAPTOR, LST8 and TOR.

It carries out the reaction L-seryl-[protein] + ATP = O-phospho-L-seryl-[protein] + ADP + H(+). The catalysed reaction is L-threonyl-[protein] + ATP = O-phospho-L-threonyl-[protein] + ADP + H(+). Insensitive to inhibition by rapamycin. Functionally, component of TORC1 complex, which is an essential cell growth regulator that controls plant development. Acts through the phosphorylation of downstream effectors that are recruited by the binding partner RAPTOR. Acts by activating transcription, protein synthesis and ribosome biogenesis, and inhibiting mRNA degradation and autophagy. This chain is Serine/threonine-protein kinase TOR, found in Oryza sativa subsp. japonica (Rice).